Here is a 955-residue protein sequence, read N- to C-terminus: MTTGLHEFNLASRRAEEAAARRFQAVQWLKSVVGQLGIPNQPSEKEFISCLRNGMILCNAINKIHPGAVSKVVENYSYLNGEYQLPPAYQYFENVRNFLVALETLRLPGFEASDLEKDNLESGSVTKVVDCILGLKAYHECKLPSNGNGLYKHVKTPTFQLSATKIHPTLSASKTSRHLDMSSVRERNDCTDGESDKLKGIAKLFADHIFSSKENIDENLVSLENGSENSRANFEKILSRFPELQSVFKNLLSEGTLKPSDLKSMPLEELPVHEEDQSSRSLSHKTKCNHKRLLKTQEKELAVLKNLFIKTKQDFKEFQVYLQRDLMELGNQMQEMSSAAQGYYKVVEENRKLYNMVQDLKGNIRVYCRVRPIFNSEMDGVIDYIGKDGSLFVLDPSKPYKDARKTFQFNQVFGPTATQDDVFRETQPLIRSVMDGYNVCIFAYGQTGSGKTYTMSGPPGRSATEMGINYLALSDLFLICDRRKDMMTYEIYVQMVEIYNEQVRDLLAENSSYIRTCSSDDDGLSLPDATMHSVNSTKDVLQLMEAGEVNRAVSSTSMNNRSSRSHSIFMVHVRGKDTSGGTLRSCLHLVDLAGSERVDKSEVTGDRLKEAQYINKSLSCLGDVISALAQKNSHIPYRNSKLTLLLQDSLGGQAKTLMFAHLSPEEDSFGETISTLKFAQRVSTVELGAARAHKETREVMHLKEQIENLKRALGTEEWNNVSNGSKEIKSPFSRPIATTERTPPRLRRLSIENCSSTKANLEDRRGIKSPLASRRAQILSLEGPMSCKNEENGKGDPTMEVHQLKNPRSPLSSYQNRAVKVDGRTSIPQLQLLQTPVKGASRNDIQMISVDSKTNGKGSHIRKSLRTIGKLINGSEKRKENIPADPRSPLGVANNFSHIKSPDTSNAKTMRRQSLTGVMPPGQERSRRSSIGGKPIENGKKDHVFTPFRLNKFNN.

The Calponin-homology (CH) domain maps to 19–140 (AARRFQAVQW…CILGLKAYHE (122 aa)). Residues 363-685 (NIRVYCRVRP…LKFAQRVSTV (323 aa)) enclose the Kinesin motor domain. Residue 445-452 (GQTGSGKT) participates in ATP binding. The stretch at 692-719 (AHKETREVMHLKEQIENLKRALGTEEWN) forms a coiled coil. A disordered region spans residues 878 to 942 (RKENIPADPR…GKPIENGKKD (65 aa)). The segment covering 894 to 916 (NNFSHIKSPDTSNAKTMRRQSLT) has biased composition (polar residues).

The protein belongs to the TRAFAC class myosin-kinesin ATPase superfamily. Kinesin family. KIN-14 subfamily.

The protein is Kinesin-like protein KIN-14L of Arabidopsis thaliana (Mouse-ear cress).